The following is a 506-amino-acid chain: Maturase K (506 aa).

It belongs to the intron maturase 2 family. MatK subfamily.

The protein localises to the plastid. It is found in the chloroplast. Functionally, usually encoded in the trnK tRNA gene intron. Probably assists in splicing its own and other chloroplast group II introns. This is Maturase K from Melilotus indicus (Sourclover).